A 47-amino-acid chain; its full sequence is Large ribosomal subunit protein bL34 (47 aa).

Belongs to the bacterial ribosomal protein bL34 family.

The sequence is that of Large ribosomal subunit protein bL34 from Corynebacterium glutamicum (strain R).